Here is a 325-residue protein sequence, read N- to C-terminus: ATP phosphoribosyltransferase (325 aa).

The protein belongs to the ATP phosphoribosyltransferase family. Long subfamily. It depends on Mg(2+) as a cofactor.

Its subcellular location is the cytoplasm. It carries out the reaction 1-(5-phospho-beta-D-ribosyl)-ATP + diphosphate = 5-phospho-alpha-D-ribose 1-diphosphate + ATP. Its pathway is amino-acid biosynthesis; L-histidine biosynthesis; L-histidine from 5-phospho-alpha-D-ribose 1-diphosphate: step 1/9. Its activity is regulated as follows. Feedback inhibited by histidine. In terms of biological role, catalyzes the condensation of ATP and 5-phosphoribose 1-diphosphate to form N'-(5'-phosphoribosyl)-ATP (PR-ATP). Has a crucial role in the pathway because the rate of histidine biosynthesis seems to be controlled primarily by regulation of HisG enzymatic activity. This Rhodopseudomonas palustris (strain BisA53) protein is ATP phosphoribosyltransferase.